The primary structure comprises 100 residues: Urease subunit gamma (100 aa).

This sequence belongs to the urease gamma subunit family. In terms of assembly, heterotrimer of UreA (gamma), UreB (beta) and UreC (alpha) subunits. Three heterotrimers associate to form the active enzyme.

Its subcellular location is the cytoplasm. It carries out the reaction urea + 2 H2O + H(+) = hydrogencarbonate + 2 NH4(+). It functions in the pathway nitrogen metabolism; urea degradation; CO(2) and NH(3) from urea (urease route): step 1/1. The polypeptide is Urease subunit gamma (Tolumonas auensis (strain DSM 9187 / NBRC 110442 / TA 4)).